The sequence spans 146 residues: MKILVLNGPNLGRLGRRQPEVYGSETLADVEARLQRLAGELGVEVELRQTDAEHEMLGWIHDAADAGLPVVLNPAAWTHTSVALRDACAELSAGLVEVHVSNVHAREDFRRHSFVSPVATGVVAGLGTAGYDLAVRFLAGRVVGGA.

Catalysis depends on Y22, which acts as the Proton acceptor. N73, H79, and D86 together coordinate substrate. Catalysis depends on H99, which acts as the Proton donor. Residues 100–101 (VS) and R110 each bind substrate.

This sequence belongs to the type-II 3-dehydroquinase family. As to quaternary structure, homododecamer.

It catalyses the reaction 3-dehydroquinate = 3-dehydroshikimate + H2O. The protein operates within metabolic intermediate biosynthesis; chorismate biosynthesis; chorismate from D-erythrose 4-phosphate and phosphoenolpyruvate: step 3/7. Functionally, catalyzes a trans-dehydration via an enolate intermediate. This chain is 3-dehydroquinate dehydratase, found in Kineococcus radiotolerans (strain ATCC BAA-149 / DSM 14245 / SRS30216).